The chain runs to 274 residues: Fatty-acid O-methyltransferase (274 aa).

The protein belongs to the methyltransferase superfamily.

It catalyses the reaction a fatty acid + S-adenosyl-L-methionine = a fatty acid methyl ester + S-adenosyl-L-homocysteine. Its function is as follows. O-methyltransferase that modifies the hydroxy group of the fatty acids. Oleate is the most effective fatty acid acceptor. This is Fatty-acid O-methyltransferase (mtf2) from Mycolicibacterium smegmatis (strain ATCC 700084 / mc(2)155) (Mycobacterium smegmatis).